Here is a 129-residue protein sequence, read N- to C-terminus: Sigma factor-binding protein Crl (129 aa).

The tract at residues 99–119 is essential for activity; that stretch reads TQNCFHLKLVKTLEENFQLSV.

It belongs to the Crl family.

It is found in the cytoplasm. Its function is as follows. Binds to the sigma-S subunit of RNA polymerase, activating expression of sigma-S-regulated genes. Stimulates RNA polymerase holoenzyme formation and may bind to several other sigma factors, such as sigma-70 and sigma-32. The protein is Sigma factor-binding protein Crl of Vibrio vulnificus (strain CMCP6).